We begin with the raw amino-acid sequence, 625 residues long: Autophagy-related protein 13b (625 aa).

Low complexity-rich tracts occupy residues 322 to 332 and 455 to 477; these read PSVSCSPSPTR and PSGV…SSRS. 3 disordered regions span residues 322–388, 452–527, and 544–564; these read PSVS…AVPR, FRRP…YPKK, and PPLR…NNNK. Over residues 498–518 the composition is skewed to basic and acidic residues; the sequence is ITDRNSRPGSFDHRGDIHEPF.

The protein belongs to the ATG13 family. Plant subfamily.

It is found in the cytoplasmic vesicle. The protein localises to the autophagosome. Functionally, involved in autophagy in a nutritional condition dependent manner. The ATG1-ATG13 protein kinase complex regulates downstream events required for autophagosome enclosure and/or vacuolar delivery. Becomes a target of autophagy under nutrient starvation. Connects autophagy to plant nutritional status. This is Autophagy-related protein 13b from Arabidopsis thaliana (Mouse-ear cress).